The chain runs to 438 residues: Arginine deiminase-like protein (438 aa).

The protein belongs to the arginine deiminase family.

In Mycoplasma pneumoniae (strain ATCC 29342 / M129 / Subtype 1) (Mycoplasmoides pneumoniae), this protein is Arginine deiminase-like protein.